The following is a 423-amino-acid chain: MDAENGEGQVQVHLKTKQEHYAVPDVPYAIDGTMTTVELNTFLNALLRNKSGDESAIDFDFLVFDEYLRGRLCDHLKEKAISFEDAIEIEYVERFPAPQPQDCLLHDDWVSAVKVSGKWILTGCYDNTLNIWTHKGKHILTIPGHTAPIKAVDWISLDNDIGRFVSSSQDQTVMLWQWNVDSNAVECVSICKGHERGVDSISVSPDATRFATGSWDTMLKVWSAAEDDAGGDAASSKRPKENGVRTPIMTLQGHRESISAVQWIDTSTLLTTSWDHTMKIWDLSLEGIKTEISTNKSIFDASYSNLNRLIVTASADKNLRLYDPRTNQGSIVRNTYLGHNAWVQTVMWSTTEEFLFVSGAYDNQNKLWDCRSPKAPLYDLLGHGEKVLDIDWSNPKYICSGGADNTVRVFKSRKAGVETMDDK.

The interval 10 to 93 (VQVHLKTKQE…EDAIEIEYVE (84 aa)) is ubiquitin-like (UBL) domain. WD repeat units lie at residues 105–142 (LHDDWVSAVKVSGKWILTGCYDNTLNIWTHKGKHILTI), 144–186 (GHTA…NAVE), 193–232 (GHERGVDSISVSPDATRFATGSWDTMLKVWSAAEDDAGGD), 253–291 (GHRESISAVQWIDTSTLLTTSWDHTMKIWDLSLEGIKTE), 293–332 (STNKSIFDASYSNLNRLIVTASADKNLRLYDPRTNQGSIV), 338–378 (GHNA…APLY), and 382–420 (GHGEKVLDIDWSNPKYICSGGADNTVRVFKSRKAGVETM).

Belongs to the WD repeat WDR12/YTM1 family.

Its subcellular location is the nucleus. The protein resides in the nucleolus. The protein localises to the nucleoplasm. Required for maturation of ribosomal RNAs and formation of the large ribosomal subunit. The protein is Ribosome biogenesis protein WDR12 homolog of Drosophila willistoni (Fruit fly).